A 295-amino-acid polypeptide reads, in one-letter code: MHANTLLNVESTVLDFWRLLKPRIMYLVVFTAVAGMVAAPGSIHPFLALISLICIALGSGSAGAINMWYDRDIDLLMKRTKARPIPSGRVSAESALEFGVTIGVLSVFIMAIAVNYISAILLAIGILFYIFIYTIWLKRRTPQNIVIGGASGAFPPVIGWAVVTDSVSWRGFVLFLIIFMWTPPHFWALSLNKSEDYEKASVPMFNVVYGPEKTRKYILVYSVLLVLTSLLPALFLKRAPFYLGMAIFGGCIFIWHAVSIMKLKDHSSQKRMFSYSISYLFFLFASIILCSIDLF.

9 helical membrane-spanning segments follow: residues 24 to 43 (IMYLVVFTAVAGMVAAPGSI), 47 to 69 (LALISLICIALGSGSAGAINMWY), 94 to 114 (SALEFGVTIGVLSVFIMAIAV), 117 to 137 (ISAILLAIGILFYIFIYTIWL), 144 to 164 (NIVIGGASGAFPPVIGWAVVT), 171 to 191 (GFVLFLIIFMWTPPHFWALSL), 216 to 236 (KYILVYSVLLVLTSLLPALFL), 241 to 261 (FYLGMAIFGGCIFIWHAVSIM), and 272 to 292 (MFSYSISYLFFLFASIILCSI).

Belongs to the UbiA prenyltransferase family. Protoheme IX farnesyltransferase subfamily.

The protein localises to the cell membrane. The catalysed reaction is heme b + (2E,6E)-farnesyl diphosphate + H2O = Fe(II)-heme o + diphosphate. The protein operates within porphyrin-containing compound metabolism; heme O biosynthesis; heme O from protoheme: step 1/1. Functionally, converts heme B (protoheme IX) to heme O by substitution of the vinyl group on carbon 2 of heme B porphyrin ring with a hydroxyethyl farnesyl side group. This chain is Protoheme IX farnesyltransferase, found in Wolbachia sp. subsp. Brugia malayi (strain TRS).